The sequence spans 216 residues: Uracil phosphoribosyltransferase (216 aa).

5-phospho-alpha-D-ribose 1-diphosphate is bound by residues Arg85, Arg110, and 135–143 (DPMVATGYS). Uracil is bound by residues Ile200 and 205–207 (GDA). Asp206 contacts 5-phospho-alpha-D-ribose 1-diphosphate.

This sequence belongs to the UPRTase family. It depends on Mg(2+) as a cofactor.

It carries out the reaction UMP + diphosphate = 5-phospho-alpha-D-ribose 1-diphosphate + uracil. It functions in the pathway pyrimidine metabolism; UMP biosynthesis via salvage pathway; UMP from uracil: step 1/1. Its activity is regulated as follows. Allosterically activated by GTP. Its function is as follows. Catalyzes the conversion of uracil and 5-phospho-alpha-D-ribose 1-diphosphate (PRPP) to UMP and diphosphate. The sequence is that of Uracil phosphoribosyltransferase from Burkholderia vietnamiensis (strain G4 / LMG 22486) (Burkholderia cepacia (strain R1808)).